The chain runs to 284 residues: Pantothenate synthetase (284 aa).

ATP is bound at residue 30-37 (MGNLHEGH). H37 functions as the Proton donor in the catalytic mechanism. Q61 is a (R)-pantoate binding site. Q61 lines the beta-alanine pocket. 149–152 (GEKD) provides a ligand contact to ATP. (R)-pantoate is bound at residue Q155. Residues V178 and 186-189 (LSSR) each bind ATP.

It belongs to the pantothenate synthetase family. Homodimer.

It is found in the cytoplasm. The catalysed reaction is (R)-pantoate + beta-alanine + ATP = (R)-pantothenate + AMP + diphosphate + H(+). It functions in the pathway cofactor biosynthesis; (R)-pantothenate biosynthesis; (R)-pantothenate from (R)-pantoate and beta-alanine: step 1/1. Functionally, catalyzes the condensation of pantoate with beta-alanine in an ATP-dependent reaction via a pantoyl-adenylate intermediate. In Yersinia pseudotuberculosis serotype O:1b (strain IP 31758), this protein is Pantothenate synthetase.